We begin with the raw amino-acid sequence, 284 residues long: Sulfotransferase 2A1 (284 aa).

3'-phosphoadenylyl sulfate-binding residues include K43, S44, G45, T46, N47, and W48. H98 serves as the catalytic Proton acceptor. Positions 120, 128, 183, 217, 222, 246, 247, and 248 each coordinate 3'-phosphoadenylyl sulfate.

Belongs to the sulfotransferase 1 family. In terms of assembly, homodimer.

Its subcellular location is the cytoplasm. It catalyses the reaction an alcohol + 3'-phosphoadenylyl sulfate = an alkyl sulfate + adenosine 3',5'-bisphosphate + H(+). It carries out the reaction taurolithocholate + 3'-phosphoadenylyl sulfate = taurolithocholate 3-sulfate + adenosine 3',5'-bisphosphate + H(+). The catalysed reaction is lithocholate + 3'-phosphoadenylyl sulfate = lithocholate sulfate + adenosine 3',5'-bisphosphate + H(+). The enzyme catalyses (24S)-hydroxycholesterol + 3'-phosphoadenylyl sulfate = (24S)-hydroxycholesterol 24-sulfate + adenosine 3',5'-bisphosphate + H(+). It catalyses the reaction (24S)-hydroxycholesterol + 3'-phosphoadenylyl sulfate = (24S)-hydroxycholesterol 3-sulfate + adenosine 3',5'-bisphosphate + H(+). It carries out the reaction (24S)-hydroxycholesterol 24-sulfate + 3'-phosphoadenylyl sulfate = (24S)-hydroxycholesterol 3,24-disulfate + adenosine 3',5'-bisphosphate + H(+). The catalysed reaction is 3beta-hydroxyandrost-5-en-17-one + 3'-phosphoadenylyl sulfate = dehydroepiandrosterone 3-sulfate + adenosine 3',5'-bisphosphate + H(+). The enzyme catalyses pregnenolone + 3'-phosphoadenylyl sulfate = pregnenolone sulfate + adenosine 3',5'-bisphosphate + H(+). It catalyses the reaction androsterone + 3'-phosphoadenylyl sulfate = androsterone 3alpha-sulfate + adenosine 3',5'-bisphosphate + H(+). Functionally, sulfotransferase that utilizes 3'-phospho-5'-adenylyl sulfate (PAPS) as sulfonate donor to catalyze the sulfonation of steroids and bile acids in the liver and adrenal glands. Mediates the sulfation of a wide range of steroids and sterols, including pregnenolone, androsterone, DHEA, bile acids, cholesterol and as well many xenobiotics that contain alcohol and phenol functional groups. Sulfonation increases the water solubility of most compounds, and therefore their renal excretion, but it can also result in bioactivation to form active metabolites. Plays an important role in maintening steroid and lipid homeostasis. Plays a key role in bile acid metabolism. In addition, catalyzes the metabolic activation of potent carcinogenic polycyclic arylmethanols. This chain is Sulfotransferase 2A1 (Sult2a1), found in Rattus norvegicus (Rat).